We begin with the raw amino-acid sequence, 393 residues long: Enoyl-[acyl-carrier-protein] reductase [NADH] (393 aa).

Residues 48–53 (GSSTGY), 74–75 (FE), 111–112 (DA), and 139–140 (LA) contribute to the NAD(+) site. Substrate is bound at residue Tyr225. Catalysis depends on Tyr235, which acts as the Proton donor. NAD(+)-binding positions include Lys244 and 273 to 275 (LVT).

This sequence belongs to the TER reductase family. Monomer.

The catalysed reaction is a 2,3-saturated acyl-[ACP] + NAD(+) = a (2E)-enoyl-[ACP] + NADH + H(+). The protein operates within lipid metabolism; fatty acid biosynthesis. Involved in the final reduction of the elongation cycle of fatty acid synthesis (FAS II). Catalyzes the reduction of a carbon-carbon double bond in an enoyl moiety that is covalently linked to an acyl carrier protein (ACP). The polypeptide is Enoyl-[acyl-carrier-protein] reductase [NADH] (Pseudoalteromonas atlantica (strain T6c / ATCC BAA-1087)).